A 1040-amino-acid polypeptide reads, in one-letter code: Multidrug resistance protein MdtB (1040 aa).

Transmembrane regions (helical) follow at residues 16 to 36, 347 to 367, 369 to 389, 396 to 416, 440 to 460, 472 to 492, 537 to 557, 863 to 883, 888 to 908, 911 to 931, 968 to 988, and 998 to 1018; these read FIMR…AGII, LMMA…NIPA, IIPG…MVFL, LTLM…IVVI, IGFT…PLLF, FAIT…TLTP, WLTL…WVFI, LGST…VLGI, FIHP…ALLA, IAGS…IGIV, ILMT…STGV, and IGMV…TPVI.

The protein belongs to the resistance-nodulation-cell division (RND) (TC 2.A.6) family. MdtB subfamily. As to quaternary structure, part of a tripartite efflux system composed of MdtA, MdtB and MdtC. MdtB forms a heteromultimer with MdtC.

The protein resides in the cell inner membrane. In terms of biological role, the MdtABC tripartite complex confers resistance against novobiocin and deoxycholate. In Escherichia coli (strain SE11), this protein is Multidrug resistance protein MdtB.